The chain runs to 134 residues: MIIGIGSDLIDIRRVEKSIERFGTRFTERCFTDIERAKSEGRKNKAASYAKRFAAKEACSKALGTGLAQGVFWRDMGVVNLPSGKPTMQLTGGAARRLAAMLPENHRAAIHLTITDDFPLAQAFVIIEALPIAG.

Mg(2+)-binding residues include Asp-8 and Glu-57.

This sequence belongs to the P-Pant transferase superfamily. AcpS family. Mg(2+) is required as a cofactor.

Its subcellular location is the cytoplasm. The enzyme catalyses apo-[ACP] + CoA = holo-[ACP] + adenosine 3',5'-bisphosphate + H(+). In terms of biological role, transfers the 4'-phosphopantetheine moiety from coenzyme A to a Ser of acyl-carrier-protein. The polypeptide is Holo-[acyl-carrier-protein] synthase (Rhizobium rhizogenes (strain K84 / ATCC BAA-868) (Agrobacterium radiobacter)).